A 323-amino-acid polypeptide reads, in one-letter code: Elongation factor P--(R)-beta-lysine ligase (323 aa).

76-78 (SPE) provides a ligand contact to substrate. ATP-binding positions include 100-102 (RNE) and Asn109. Tyr118 serves as a coordination point for substrate. 242–243 (EL) serves as a coordination point for ATP. Glu249 provides a ligand contact to substrate. Gly298 lines the ATP pocket.

The protein belongs to the class-II aminoacyl-tRNA synthetase family. EpmA subfamily. In terms of assembly, homodimer.

It carries out the reaction D-beta-lysine + L-lysyl-[protein] + ATP = N(6)-((3R)-3,6-diaminohexanoyl)-L-lysyl-[protein] + AMP + diphosphate + H(+). With EpmB is involved in the beta-lysylation step of the post-translational modification of translation elongation factor P (EF-P). Catalyzes the ATP-dependent activation of (R)-beta-lysine produced by EpmB, forming a lysyl-adenylate, from which the beta-lysyl moiety is then transferred to the epsilon-amino group of a conserved specific lysine residue in EF-P. This Actinobacillus succinogenes (strain ATCC 55618 / DSM 22257 / CCUG 43843 / 130Z) protein is Elongation factor P--(R)-beta-lysine ligase.